Consider the following 1267-residue polypeptide: RNA-directed RNA polymerase lambda-3 (1267 aa).

Residues 555–792 (LSPTSGSAVI…KLYFIFGCRI (238 aa)) enclose the RdRp catalytic domain.

The protein belongs to the reoviridae RNA-directed RNA polymerase family.

The protein resides in the virion. It catalyses the reaction RNA(n) + a ribonucleoside 5'-triphosphate = RNA(n+1) + diphosphate. Its function is as follows. RNA-directed RNA polymerase that is involved in transcription and genome replication. Following infection, it catalyzes the synthesis of fully conservative plus strands. After core assembly, which consists in recruitment of one capped plus-strand for each genomic segments and polymerase complexes, the polymerase switches mode and catalyzes the synthesis of complementary minus-strands. The chain is RNA-directed RNA polymerase lambda-3 (L1) from Reovirus type 3 (strain Dearing) (T3D).